Consider the following 328-residue polypeptide: MGLVRSLCLLITFLNCLIISVHGQATARPGPVSGTRIGFYLTTCPRAETIVRNAVNAGFSSDPRIAPGILRMHFHDCFVQGCDGSILISGANTERTAGPNLNLQGFEVIDNAKTQLEAACPGVVSCADILALAARDTVILTQGTGWQVPTGRRDGRVSLASNANNLPGPRDSVAVQQQKFSALGLNTRDLVVLVGGHTIGTAGCGVFRNRLFNTTGQTADPTIDPTFLAQLQTQCPQNGDGSVRVDLDTGSGSTWDTSYYNNLSRGRGVLQSDQVLWTDPATRPIVQQLMAPRSTFNVEFARSMVRMSNIGVVTGANGEIRRVCSAVN.

An N-terminal signal peptide occupies residues 1–23; the sequence is MGLVRSLCLLITFLNCLIISVHG. 4 disulfide bridges follow: C44-C120, C77-C82, C126-C324, and C204-C235. Catalysis depends on H75, which acts as the Proton acceptor. 5 residues coordinate Ca(2+): D76, V79, G81, D83, and S85. Residue P167 coordinates substrate. H197 contacts heme b. T198 is a binding site for Ca(2+). A glycan (N-linked (GlcNAc...) asparagine) is linked at N213. D248, S251, and D256 together coordinate Ca(2+). N262 carries an N-linked (GlcNAc...) asparagine glycan.

Belongs to the peroxidase family. Classical plant (class III) peroxidase subfamily. Heme b serves as cofactor. The cofactor is Ca(2+). Slightly expressed in roots.

The protein resides in the secreted. It carries out the reaction 2 a phenolic donor + H2O2 = 2 a phenolic radical donor + 2 H2O. Functionally, removal of H(2)O(2), oxidation of toxic reductants, biosynthesis and degradation of lignin, suberization, auxin catabolism, response to environmental stresses such as wounding, pathogen attack and oxidative stress. These functions might be dependent on each isozyme/isoform in each plant tissue. This chain is Peroxidase 71 (PER71), found in Arabidopsis thaliana (Mouse-ear cress).